We begin with the raw amino-acid sequence, 38 residues long: Photosystem II reaction center protein L (38 aa).

The chain crosses the membrane as a helical span at residues 17–37; it reads SLYFGLLLIFVLAVLFSSYIF.

Belongs to the PsbL family. As to quaternary structure, PSII is composed of 1 copy each of membrane proteins PsbA, PsbB, PsbC, PsbD, PsbE, PsbF, PsbH, PsbI, PsbJ, PsbK, PsbL, PsbM, PsbT, PsbX, PsbY, PsbZ, Psb30/Ycf12, at least 3 peripheral proteins of the oxygen-evolving complex and a large number of cofactors. It forms dimeric complexes.

Its subcellular location is the plastid. The protein resides in the chloroplast thylakoid membrane. One of the components of the core complex of photosystem II (PSII). PSII is a light-driven water:plastoquinone oxidoreductase that uses light energy to abstract electrons from H(2)O, generating O(2) and a proton gradient subsequently used for ATP formation. It consists of a core antenna complex that captures photons, and an electron transfer chain that converts photonic excitation into a charge separation. This subunit is found at the monomer-monomer interface and is required for correct PSII assembly and/or dimerization. This is Photosystem II reaction center protein L from Chlamydomonas moewusii (Chlamydomonas eugametos).